The primary structure comprises 55 residues: MVKLSKEAKQRLQQLFKGSQFAIRWGFIPLVIYLGFKRGADPGMPEPTVLSLLWG.

The Cytoplasmic segment spans residues 1-20 (MVKLSKEAKQRLQQLFKGSQ). Residues 21–36 (FAIRWGFIPLVIYLGF) form a helical membrane-spanning segment. Residues 37 to 55 (KRGADPGMPEPTVLSLLWG) lie on the Mitochondrial intermembrane side of the membrane.

Belongs to the Tom7 family. Forms part of the preprotein translocase complex of the outer mitochondrial membrane (TOM complex) which consists of at least 7 different proteins (TOMM5, TOMM6, TOMM7, TOMM20, TOMM22, TOMM40 and TOMM70).

It localises to the mitochondrion outer membrane. In terms of biological role, required for assembly and stability of the TOM complex. Positive regulator of PRKN translocation to damaged mitochondria. Acts probably by stabilizing PINK1 on the outer membrane of depolarized mitochondria. The polypeptide is Mitochondrial import receptor subunit TOM7 homolog (TOMM7) (Homo sapiens (Human)).